Reading from the N-terminus, the 194-residue chain is Protein phosphatase 1 regulatory subunit 1B (194 aa).

Residue M1 is modified to N-acetylmethionine. Residues 1 to 194 (MDPKDRKKIQ…GEEPQHPSPP (194 aa)) form a disordered region. Phosphothreonine; by PKA is present on T34. A compositionally biased stretch (basic and acidic residues) spans 41–63 (VSEHSSPEEEASPHQRTSGEGHH). Residues S45 and S46 each carry the phosphoserine modification. T75 bears the Phosphothreonine mark. Over residues 84–95 (HLQTISNLSENQ) the composition is skewed to polar residues. Phosphoserine occurs at positions 97 and 130. Over residues 113 to 131 (QEDDEEDEDEEEDEEEDSQ) the composition is skewed to acidic residues. The segment covering 160–170 (PPLDEPQRDGN) has biased composition (basic and acidic residues). The residue at position 192 (S192) is a Phosphoserine.

Belongs to the protein phosphatase inhibitor 1 family. Dopamine- and cyclic AMP-regulated neuronal phosphoprotein. Post-translationally, phosphorylation of Thr-34 is required for activity.

Its subcellular location is the cytoplasm. In terms of biological role, inhibitor of protein-phosphatase 1. In Mus musculus (Mouse), this protein is Protein phosphatase 1 regulatory subunit 1B (Ppp1r1b).